The primary structure comprises 132 residues: ATP synthase epsilon chain, chloroplastic (132 aa).

It belongs to the ATPase epsilon chain family. As to quaternary structure, F-type ATPases have 2 components, CF(1) - the catalytic core - and CF(0) - the membrane proton channel. CF(1) has five subunits: alpha(3), beta(3), gamma(1), delta(1), epsilon(1). CF(0) has three main subunits: a, b and c.

It localises to the plastid. Its subcellular location is the chloroplast thylakoid membrane. Produces ATP from ADP in the presence of a proton gradient across the membrane. This is ATP synthase epsilon chain, chloroplastic from Calycanthus floridus var. glaucus (Eastern sweetshrub).